We begin with the raw amino-acid sequence, 176 residues long: F(420)H(2) dehydrogenase subunit J (176 aa).

Helical transmembrane passes span 13–33 (TAVFGLLALVTVFFAIFVVIA), 39–59 (AGLALIMCMFGVAGLYILLNA), 64–84 (VIQVLVYIGAIGVLILFAVML), 99–119 (PLAFLVCLLFVAVVVTGAFGT), and 140–160 (IGMLIFTHFVAPFEVLSIVLL).

Belongs to the complex I subunit 6 family. In terms of assembly, the FPO complex is composed of at least 13 different subunits. FpoA, FpoH, FpoJ, FpoK, FpoL, FpoM and FpoN proteins constitute the membrane sector of the complex.

It localises to the cell membrane. The catalysed reaction is methanophenazine + reduced coenzyme F420-(gamma-L-Glu)(n) = dihydromethanophenazine + oxidized coenzyme F420-(gamma-L-Glu)(n) + H(+). Component of the F(420)H(2) dehydrogenase (FPO complex) which is part of the energy-conserving F(420)H(2):heterodisulfide oxidoreductase system. The membrane-bound electron transfer system of the complex plays an important role in the metabolism of methylotrophic methanogens when the organisms grow on methanol or methylamines. Catalyzes the oxidation of methanophenazine to dihydromethanophenazine. It shuttles electrons from F(420)H(2), via FAD and iron-sulfur (Fe-S) centers, to methanophenazine (an electron carrier in the membrane). It couples the redox reaction to proton translocation (for every two electrons transferred, two hydrogen ions are translocated across the cytoplasmic membrane), and thus conserves the redox energy in a proton gradient. It also catalyzes the oxidation of F(420)H(2) with quinones such as 2,3-dimethyl-1,4-naphthoquinone, 2-methyl-1,4-naphthoquinone and tetramethyl-p-benzoquinone. In Methanosarcina mazei (strain ATCC BAA-159 / DSM 3647 / Goe1 / Go1 / JCM 11833 / OCM 88) (Methanosarcina frisia), this protein is F(420)H(2) dehydrogenase subunit J (fpoJ).